We begin with the raw amino-acid sequence, 663 residues long: Tripartite terminase subunit 3 (663 aa).

The Walker A motif motif lies at 205–212 (VPRRHGKT). The short motif at 297–302 (LLIVDE) is the Walker B motif element. E302 (for ATPase activity) is an active-site residue. Active-site for nuclease activity residues include D455, E526, and D640.

It belongs to the herpesviridae TRM3 protein family. In terms of assembly, interacts with the terminase subunits TRM1 and TRM2. Interacts with portal protein.

It is found in the host nucleus. Its function is as follows. Component of the molecular motor that translocates viral genomic DNA in empty capsid during DNA packaging. Forms a tripartite terminase complex together with TRM1 and TRM2 in the host cytoplasm. Once the complex reaches the host nucleus, it interacts with the capsid portal vertex. This portal forms a ring in which genomic DNA is translocated into the capsid. TRM3 carries an RNase H-like nuclease activity that plays an important role for the cleavage of concatemeric viral DNA into unit length genomes. The polypeptide is Tripartite terminase subunit 3 (Human herpesvirus 7 (strain JI) (HHV-7)).